A 930-amino-acid polypeptide reads, in one-letter code: Nonribosomal peptide synthetase btyA (930 aa).

The interval 31–440 is adenylation (A) domain; sequence ESPHRLTYAE…RGRSKELICI (410 aa). The Carrier domain maps to 570 to 647; it reads PAGNETETLL…VLARQLQDGH (78 aa). Ser-607 is modified (O-(pantetheine 4'-phosphoryl)serine). The interval 667–920 is thioesterase (TE) domain; the sequence is PLWLIHPIGG…EDNVHKVYRV (254 aa).

It belongs to the NRP synthetase family.

The catalysed reaction is 2 3-(4-hydroxyphenyl)pyruvate + H(+) = (2S)-2-(4-hydoxybenzyl)-3-(4-hydroxyphenyl)-2-furonol carboxylate + H2O. It functions in the pathway secondary metabolite biosynthesis. Functionally, nonribosomal peptide synthetase; part of the gene cluster that mediates the biosynthesis of butyrolactones, natural products that show a wide range of biological activities such as antitumor, antiparasitic or anti-inflammatory activity. The nonribosomal peptide synthetase btyA is responsible for the production of butyrolactone II, the core structure of butyrolactones. BtyA first activates 4-hydroxyphenylpyruvate (HPPA) through its A domain to AMP-HPPA. The HPPA unit is then loaded to the T domain and eventually transferred to the TE domain. Upon loading of another HPPA unit to the T domain, the TE domain promotes the enolate formation on the unit attached. Then aldol condensation establishes the carbon-carbon bond between the two units, followed by ester cyclization, and keto-enol tautomerization to yield the gamma-butyrolactone core. Hydrolysis, and finally esterification of the exposed carboxylic acid group yields butyrolactone II. Two additional enzymes, a prenyltransferase and an epoxidase, may be involved in the tailoring modifications of butyrolactone II to give butyrolactone III and butyrolactone I. This Aspergillus terreus (strain NIH 2624 / FGSC A1156) protein is Nonribosomal peptide synthetase btyA.